The chain runs to 1206 residues: DNA-directed RNA polymerase subunit beta' (1206 aa).

Residues cysteine 60, cysteine 62, cysteine 75, and cysteine 78 each coordinate Zn(2+). Residues aspartate 449, aspartate 451, and aspartate 453 each contribute to the Mg(2+) site. Positions 818, 892, 899, and 902 each coordinate Zn(2+).

Belongs to the RNA polymerase beta' chain family. In terms of assembly, the RNAP catalytic core consists of 2 alpha, 1 beta, 1 beta' and 1 omega subunit. When a sigma factor is associated with the core the holoenzyme is formed, which can initiate transcription. Mg(2+) is required as a cofactor. The cofactor is Zn(2+).

The catalysed reaction is RNA(n) + a ribonucleoside 5'-triphosphate = RNA(n+1) + diphosphate. Its function is as follows. DNA-dependent RNA polymerase catalyzes the transcription of DNA into RNA using the four ribonucleoside triphosphates as substrates. In Halalkalibacterium halodurans (strain ATCC BAA-125 / DSM 18197 / FERM 7344 / JCM 9153 / C-125) (Bacillus halodurans), this protein is DNA-directed RNA polymerase subunit beta'.